We begin with the raw amino-acid sequence, 225 residues long: Uridylate kinase (225 aa).

9–10 (GS) contributes to the ATP binding site. Glycine 46 is a binding site for UMP. Positions 47 and 51 each coordinate ATP. UMP contacts are provided by residues aspartate 67 and 115–121 (THPAHTT). The ATP site is built by threonine 141, asparagine 142, tyrosine 147, and aspartate 150.

The protein belongs to the UMP kinase family. In terms of assembly, homohexamer.

The protein localises to the cytoplasm. The enzyme catalyses UMP + ATP = UDP + ADP. Its pathway is pyrimidine metabolism; CTP biosynthesis via de novo pathway; UDP from UMP (UMPK route): step 1/1. Inhibited by UTP. Functionally, catalyzes the reversible phosphorylation of UMP to UDP. The chain is Uridylate kinase from Methanococcus vannielii (strain ATCC 35089 / DSM 1224 / JCM 13029 / OCM 148 / SB).